Reading from the N-terminus, the 228-residue chain is MNELTQTPPVADGNEPPFTRPGLVETWRERVSYQALSLGLVCALVAVALLLGNQLTHQRIVDAERQDRLAVLRQVLPQALYDNDPLADAFNVEDAELGLIEVYPARRAGQLTATAFQISTVGYGGPIVQFIALDSEGRILGVRVLSHKETPGLADKIEVTRSDWIKAFDGLSLASTPLDQWAVKKDGGQFDQFAGATITPRAIVKGVLRALEFQARQSTAQSNQETRP.

The helical transmembrane segment at 35-55 (ALSLGLVCALVAVALLLGNQL) threads the bilayer. T197 carries the post-translational modification FMN phosphoryl threonine.

It belongs to the RnfG family. The complex is composed of six subunits: RnfA, RnfB, RnfC, RnfD, RnfE and RnfG. It depends on FMN as a cofactor.

The protein localises to the cell inner membrane. In terms of biological role, part of a membrane-bound complex that couples electron transfer with translocation of ions across the membrane. In Stutzerimonas stutzeri (Pseudomonas stutzeri), this protein is Ion-translocating oxidoreductase complex subunit G.